Here is a 289-residue protein sequence, read N- to C-terminus: Glycine--tRNA ligase alpha subunit (289 aa).

The protein belongs to the class-II aminoacyl-tRNA synthetase family. As to quaternary structure, tetramer of two alpha and two beta subunits.

It is found in the cytoplasm. The catalysed reaction is tRNA(Gly) + glycine + ATP = glycyl-tRNA(Gly) + AMP + diphosphate. The chain is Glycine--tRNA ligase alpha subunit from Prochlorococcus marinus (strain MIT 9515).